A 198-amino-acid chain; its full sequence is Thymidine kinase (198 aa).

Residues 16-23 (GGMYSGKS) and 89-92 (EEGQ) contribute to the ATP site. The Proton acceptor role is filled by E90. The Zn(2+) site is built by C146, C149, C184, and C187.

This sequence belongs to the thymidine kinase family. In terms of assembly, homotetramer.

Its subcellular location is the cytoplasm. The catalysed reaction is thymidine + ATP = dTMP + ADP + H(+). The chain is Thymidine kinase from Dictyoglomus thermophilum (strain ATCC 35947 / DSM 3960 / H-6-12).